The sequence spans 376 residues: N-acetyldiaminopimelate deacetylase (376 aa).

The active site involves Asp69. The Proton acceptor role is filled by Glu128.

It belongs to the peptidase M20A family. N-acetyldiaminopimelate deacetylase subfamily.

It catalyses the reaction N-acetyl-(2S,6S)-2,6-diaminopimelate + H2O = (2S,6S)-2,6-diaminopimelate + acetate. Its pathway is amino-acid biosynthesis; L-lysine biosynthesis via DAP pathway; LL-2,6-diaminopimelate from (S)-tetrahydrodipicolinate (acetylase route): step 3/3. In terms of biological role, catalyzes the conversion of N-acetyl-diaminopimelate to diaminopimelate and acetate. The polypeptide is N-acetyldiaminopimelate deacetylase (Bacillus cereus (strain G9842)).